A 391-amino-acid chain; its full sequence is MGCRACLRPEASGAVQGRWLGAALSGLCLLSALALLEWLGAPTETAWRAAQGNVDAPNVGSSTAQVPRLLTMSVTRRRRYTLTPARLRWDHFNLTYRVLSFPRNLLSPEETRRGLAAAFRMWSDVSPFSFREVAPERPSDLKIGFYPVNHTDCLVSAVHHCFDGPTGELAHAFFPPHGGIHFDDSEYWVLGPTRYSWKKGVWLTNLVHVAAHEIGHALGLMHSQQDQALMHLNATLRGWKALSQDELWGLHRLYGCLDRIFVCASWARKGFCDVRQRLMKRLCPRSCDFCYEFPFPTVATTTSPTRTKTRLVREGRNMTFHCGQKILHKKGKVYWYKDQEPLEFSYPGYLALGEAQLSIIANAVNEGTYTCVVRRHQRVLSTYSWRVRVRN.

Residues 1–18 are Cytoplasmic-facing; sequence MGCRACLRPEASGAVQGR. A propeptide spanning residues 1–79 is cleaved from the precursor; the sequence is MGCRACLRPE…LTMSVTRRRR (79 aa). Residues 19–39 traverse the membrane as a helical segment; sequence WLGAALSGLCLLSALALLEWL. Residues 40–391 lie on the Lumenal side of the membrane; sequence GAPTETAWRA…TYSWRVRVRN (352 aa). Asn-93 and Asn-149 each carry an N-linked (GlcNAc...) asparagine glycan. His-212 lines the Zn(2+) pocket. The active site involves Glu-213. Zn(2+) is bound by residues His-216 and His-222. An N-linked (GlcNAc...) asparagine glycan is attached at Asn-233. The ShKT domain maps to 256–290; the sequence is CLDRIFVCASWARKGFCDVRQRLMKRLCPRSCDFC. Intrachain disulfides connect Cys-256/Cys-290, Cys-263/Cys-283, and Cys-272/Cys-287. An Ig-like C2-type domain is found at 298–383; it reads VATTTSPTRT…RRHQRVLSTY (86 aa). The N-linked (GlcNAc...) asparagine glycan is linked to Asn-317. A disulfide bond links Cys-322 and Cys-371.

The protein belongs to the peptidase M10A family. Zn(2+) is required as a cofactor. In terms of processing, N-glycosylated. Post-translationally, proteolytic cleavage might yield an active form. In terms of tissue distribution, expressed at relatively high level in heart, lung and spleen. Not detected in brain, liver, skeletal muscle, kidney and testis.

It localises to the endoplasmic reticulum membrane. The protein localises to the membrane. Inhibited by TIMP2. Protease. May regulate the surface expression of some potassium channels by retaining them in the endoplasmic reticulum. The chain is Matrix metalloproteinase-23 (Mmp23) from Mus musculus (Mouse).